Reading from the N-terminus, the 237-residue chain is 2,3-bisphosphoglycerate-dependent phosphoglycerate mutase (237 aa).

Residues 10–17 (RHGESKWN), 23–24 (TG), Arg62, 89–92 (ERHY), Lys100, 116–117 (RR), and 185–186 (GN) each bind substrate. The active-site Tele-phosphohistidine intermediate is His11. Catalysis depends on Glu89, which acts as the Proton donor/acceptor.

This sequence belongs to the phosphoglycerate mutase family. BPG-dependent PGAM subfamily. In terms of assembly, homodimer.

It catalyses the reaction (2R)-2-phosphoglycerate = (2R)-3-phosphoglycerate. It functions in the pathway carbohydrate degradation; glycolysis; pyruvate from D-glyceraldehyde 3-phosphate: step 3/5. In terms of biological role, catalyzes the interconversion of 2-phosphoglycerate and 3-phosphoglycerate. The protein is 2,3-bisphosphoglycerate-dependent phosphoglycerate mutase of Baumannia cicadellinicola subsp. Homalodisca coagulata.